The primary structure comprises 832 residues: Protein P (832 aa).

A terminal protein domain (TP) region spans residues 1-177 (MPLSCPHFRK…FCGSPYSWEQ (177 aa)). The spacer stretch occupies residues 178-335 (ELQHGAEPVC…YCLSHLVNLL (158 aa)). Residues 208–224 (KQSRLGLQSQQRQLARS) show a composition bias toward low complexity. The segment at 208–241 (KQSRLGLQSQQRQLARSHQGRSGSIRARVHSTTR) is disordered. Residues 336–679 (EDWGPCTEHG…YLTLYPVARQ (344 aa)) are polymerase/reverse transcriptase domain (RT). A Reverse transcriptase domain is found at 346 to 589 (EHHIRIPRTP…YSLNFMGYII (244 aa)). The Mg(2+) site is built by Asp-418, Asp-540, and Asp-541.

Belongs to the hepadnaviridae P protein family.

It catalyses the reaction DNA(n) + a 2'-deoxyribonucleoside 5'-triphosphate = DNA(n+1) + diphosphate. The enzyme catalyses Endonucleolytic cleavage to 5'-phosphomonoester.. With respect to regulation, activated by host HSP70 and HSP40 in vitro to be able to bind the epsilon loop of the pgRNA. Because deletion of the RNase H region renders the protein partly chaperone-independent, the chaperones may be needed indirectly to relieve occlusion of the RNA-binding site by this domain. Inhibited by several reverse-transcriptase inhibitors: Lamivudine, Adefovir and Entecavir. In terms of biological role, multifunctional enzyme that converts the viral RNA genome into dsDNA in viral cytoplasmic capsids. This enzyme displays a DNA polymerase activity that can copy either DNA or RNA templates, and a ribonuclease H (RNase H) activity that cleaves the RNA strand of RNA-DNA heteroduplexes in a partially processive 3'- to 5'-endonucleasic mode. Neo-synthesized pregenomic RNA (pgRNA) are encapsidated together with the P protein, and reverse-transcribed inside the nucleocapsid. Initiation of reverse-transcription occurs first by binding the epsilon loop on the pgRNA genome, and is initiated by protein priming, thereby the 5'-end of (-)DNA is covalently linked to P protein. Partial (+)DNA is synthesized from the (-)DNA template and generates the relaxed circular DNA (RC-DNA) genome. After budding and infection, the RC-DNA migrates in the nucleus, and is converted into a plasmid-like covalently closed circular DNA (cccDNA). The activity of P protein does not seem to be necessary for cccDNA generation, and is presumably released from (+)DNA by host nuclear DNA repair machinery. In Gibbon hepatitis B virus subtype ayw3q (isolate Hope) (HBVgbn), this protein is Protein P.